The sequence spans 763 residues: Phospholipid phosphatase-related protein type 4 (763 aa).

Residues 33–54 form a disordered region; the sequence is VHTSPGGGRRPGQAAGMSAKER. Ser-36 bears the Phosphoserine mark. 3 helical membrane passes run 67 to 87, 119 to 139, and 178 to 198; these read LPCF…SLYF, AIPF…TIMV, and FVGV…IIQL. Asn-214 and Asn-219 each carry an N-linked (GlcNAc...) asparagine glycan. A helical transmembrane segment spans residues 247 to 267; the sequence is SFPSQHATLAAFAAVYVSMYF. A glycan (N-linked (GlcNAc...) asparagine) is linked at Asn-268. 2 helical membrane passes run 276–296 and 308–328; these read KLLK…CGLT and VYCG…YAVG. Phosphoserine is present on Ser-346. Asn-362 is a glycosylation site (N-linked (GlcNAc...) asparagine). Phosphoserine is present on Ser-385. Asn-432 carries N-linked (GlcNAc...) asparagine glycosylation. Position 438 is a phosphoserine (Ser-438). Residue Asn-455 is glycosylated (N-linked (GlcNAc...) asparagine). The tract at residues 458-529 is disordered; the sequence is RKLSLQVIEP…PRVSIQSRPG (72 aa). Phosphoserine occurs at positions 461 and 472. 3 N-linked (GlcNAc...) asparagine glycosylation sites follow: Asn-513, Asn-543, and Asn-568. Ser-606 is subject to Phosphoserine. Over residues 669–694 the composition is skewed to basic and acidic residues; it reads DSESCESLKDSFGSGDRKRSNIDSNE. 2 disordered regions span residues 669–698 and 739–763; these read DSES…HHHH and ERSN…AYKD. Residues 740 to 749 are compositionally biased toward polar residues; that stretch reads RSNSPENTRN.

Belongs to the PA-phosphatase related phosphoesterase family. Post-translationally, O-glycosylated. Probably at Ser-346. Expressed by glutamatergic neurons (at protein level).

Its subcellular location is the postsynaptic density membrane. Functionally, postsynaptic density membrane protein that indirectly regulates glutamatergic synaptic transmission through lysophosphatidic acid (LPA)-mediated signaling pathways. Binds lysophosphatidic acid (LPA) and mediates its internalization into cells. Could act as receptor or a transporter of this lipid at the post-synaptic membrane. Modulates lysophosphatidic acid (LPA) activity in neuron axonal outgrowth during development by attenuating phospholipid-induced axon collapse. This is Phospholipid phosphatase-related protein type 4 from Homo sapiens (Human).